A 396-amino-acid chain; its full sequence is Subtilisin-like protease 5 (396 aa).

The first 20 residues, 1–20 (MTGFFTILSFSLAALSVTNA), serve as a signal peptide directing secretion. Positions 21–116 (AQILSVPKGA…VEPDAIISQH (96 aa)) are excised as a propeptide. The 77-residue stretch at 37 to 113 (YIVVMKDDTS…VAFVEPDAII (77 aa)) folds into the Inhibitor I9 domain. The N-linked (GlcNAc...) asparagine glycan is linked to Asn63. Residues 125-396 (PWGLSRLSNR…SRLLYNGSGR (272 aa)) form the Peptidase S8 domain. Active-site charge relay system residues include Asp156 and His187. N-linked (GlcNAc...) asparagine glycosylation is found at Asn230 and Asn248. The active-site Charge relay system is the Ser342. Polar residues predominate over residues 376 to 389 (PTIRNPGPDTTSRL). The segment at 376 to 396 (PTIRNPGPDTTSRLLYNGSGR) is disordered. N-linked (GlcNAc...) asparagine glycosylation is present at Asn392.

Belongs to the peptidase S8 family.

The protein localises to the secreted. In terms of biological role, secreted subtilisin-like serine protease with keratinolytic activity that contributes to pathogenicity. The chain is Subtilisin-like protease 5 (SUB5) from Trichophyton verrucosum (Cattle ringworm fungus).